We begin with the raw amino-acid sequence, 137 residues long: Large ribosomal subunit protein uL16 (137 aa).

Belongs to the universal ribosomal protein uL16 family. As to quaternary structure, part of the 50S ribosomal subunit.

In terms of biological role, binds 23S rRNA and is also seen to make contacts with the A and possibly P site tRNAs. The protein is Large ribosomal subunit protein uL16 of Marinomonas sp. (strain MWYL1).